The chain runs to 162 residues: Superoxide dismutase [Cu-Zn] (162 aa).

A signal peptide spans 1-20 (MNKSGIILIGTILFSSMAIA). Residues H66, H68, and H83 each contribute to the Cu cation site. A disulfide bridge connects residues C73 and C158. Residues H83, H92, H100, and D103 each coordinate Zn(2+). A Cu cation-binding site is contributed by H137.

It belongs to the Cu-Zn superoxide dismutase family. In terms of assembly, homodimer. Cu cation serves as cofactor. The cofactor is Zn(2+).

It localises to the periplasm. It carries out the reaction 2 superoxide + 2 H(+) = H2O2 + O2. Destroys radicals which are normally produced within the cells and which are toxic to biological systems. The protein is Superoxide dismutase [Cu-Zn] (sodC) of Legionella pneumophila.